Here is a 619-residue protein sequence, read N- to C-terminus: DEAD-box ATP-dependent RNA helicase 35B (619 aa).

2 stretches are compositionally biased toward low complexity: residues 1 to 10 (MAAAAAAAAA) and 49 to 58 (PPTTNAVAVA). The tract at residues 1-72 (MAAAAAAAAA…PPRSTSSPAV (72 aa)) is disordered. The short motif at 173-201 (RSFGDLRLPEPILRALRGKGIEKPTPIQV) is the Q motif element. The Helicase ATP-binding domain maps to 204 to 388 (LPVALSGRDM…KSALVKPIIV (185 aa)). 217–224 (AFTGSGKT) provides a ligand contact to ATP. Positions 336 to 339 (DEAD) match the DEAD box motif. A Helicase C-terminal domain is found at 399–559 (DVIQEVEYVK…RLPPILADLD (161 aa)). The segment at 576–593 (KGCAFCGGLGHRIEACPK) adopts a CCHC-type zinc-finger fold.

The protein belongs to the DEAD box helicase family. DDX41 subfamily.

It catalyses the reaction ATP + H2O = ADP + phosphate + H(+). The polypeptide is DEAD-box ATP-dependent RNA helicase 35B (Oryza sativa subsp. japonica (Rice)).